Here is a 314-residue protein sequence, read N- to C-terminus: Coiled-coil domain-containing protein 42 like-2 (314 aa).

2 coiled-coil regions span residues 34 to 133 and 175 to 231; these read RLLE…KGTL and NKLL…FQWE.

Belongs to the CFAP73 family.

The sequence is that of Coiled-coil domain-containing protein 42 like-2 from Xenopus tropicalis (Western clawed frog).